Reading from the N-terminus, the 26-residue chain is Oxyopinin-3b (26 aa).

In terms of tissue distribution, expressed by the venom gland.

The protein resides in the secreted. In terms of biological role, may have cytolytic and antimicrobial activity. The protein is Oxyopinin-3b of Oxyopes takobius (Lynx spider).